The primary structure comprises 199 residues: Imidazoleglycerol-phosphate dehydratase (199 aa).

The protein belongs to the imidazoleglycerol-phosphate dehydratase family.

The protein localises to the cytoplasm. The enzyme catalyses D-erythro-1-(imidazol-4-yl)glycerol 3-phosphate = 3-(imidazol-4-yl)-2-oxopropyl phosphate + H2O. It participates in amino-acid biosynthesis; L-histidine biosynthesis; L-histidine from 5-phospho-alpha-D-ribose 1-diphosphate: step 6/9. The polypeptide is Imidazoleglycerol-phosphate dehydratase (Methylibium petroleiphilum (strain ATCC BAA-1232 / LMG 22953 / PM1)).